The chain runs to 565 residues: Proline--tRNA ligase (565 aa).

Belongs to the class-II aminoacyl-tRNA synthetase family. ProS type 1 subfamily. Homodimer.

The protein resides in the cytoplasm. It carries out the reaction tRNA(Pro) + L-proline + ATP = L-prolyl-tRNA(Pro) + AMP + diphosphate. Its function is as follows. Catalyzes the attachment of proline to tRNA(Pro) in a two-step reaction: proline is first activated by ATP to form Pro-AMP and then transferred to the acceptor end of tRNA(Pro). As ProRS can inadvertently accommodate and process non-cognate amino acids such as alanine and cysteine, to avoid such errors it has two additional distinct editing activities against alanine. One activity is designated as 'pretransfer' editing and involves the tRNA(Pro)-independent hydrolysis of activated Ala-AMP. The other activity is designated 'posttransfer' editing and involves deacylation of mischarged Ala-tRNA(Pro). The misacylated Cys-tRNA(Pro) is not edited by ProRS. This Bacillus pumilus (strain SAFR-032) protein is Proline--tRNA ligase.